We begin with the raw amino-acid sequence, 109 residues long: Photosystem II reaction center Psb28 protein (109 aa).

Belongs to the Psb28 family. In terms of assembly, part of the photosystem II complex.

It localises to the plastid. The protein resides in the chloroplast thylakoid membrane. This chain is Photosystem II reaction center Psb28 protein, found in Cyanidioschyzon merolae (strain NIES-3377 / 10D) (Unicellular red alga).